Reading from the N-terminus, the 705-residue chain is Tyrosine decarboxylase (705 aa).

Residues 22–32 (RIRNSLSPSRP) show a composition bias toward polar residues. Positions 22-81 (RIRNSLSPSRPSMSEATATGSSSSSRASTTIPSTPNMDVTPTVEDPRQNDNNASGMTRDE) are disordered. Residues 33–55 (SMSEATATGSSSSSRASTTIPST) show a composition bias toward low complexity. K380 is subject to N6-(pyridoxal phosphate)lysine. The stretch at 554–620 (VKAVIAEEDE…AQKQHESLAK (67 aa)) forms a coiled coil. The segment covering 667-678 (HSQRPNRLSQSP) has biased composition (polar residues). Positions 667–687 (HSQRPNRLSQSPGSAGSAFFD) are disordered.

The protein belongs to the group II decarboxylase family. The cofactor is pyridoxal 5'-phosphate. Expressed in the gonadal sheath projections in between the oocytes, in head RIM motor neurons and RIC interneurons.

The protein localises to the cytoplasm. It localises to the cell projection. The protein resides in the axon. Its subcellular location is the perikaryon. It carries out the reaction L-tyrosine + H(+) = tyramine + CO2. Functionally, required for the decarboxylation of tyrosine to tyramine, a precursor of octopamine but probably also itself a neurotransmitter. Involved in the regulation of egg laying, which is inhibited by tyramine. Also involved in controlling locomotion and head movements. Due to its involvement in octopamine biosynthesis, also required for crtc-1-dependent regulation of AMPK-mediated longevity which requires octopamine signaling. This Caenorhabditis elegans protein is Tyrosine decarboxylase.